We begin with the raw amino-acid sequence, 347 residues long: Haptoglobin (347 aa).

The signal sequence occupies residues 1 to 18 (MSALGAVIALLLWGQLFA). The Sushi domain maps to 31–88 (DGCPKPPQIAHGYVEHSVRYQCKNYYRLRTEGDGVYTLNSEKQWINKAVGDKLPECEA). Cystine bridges form between cysteine 52–cysteine 86, cysteine 90–cysteine 207, cysteine 250–cysteine 281, and cysteine 292–cysteine 322. Positions 103-347 (ILGGHLDAKG…DWVQKTIAKN (245 aa)) constitute a Peptidase S1 domain. N-linked (GlcNAc...) asparagine glycosylation is found at asparagine 125, asparagine 148, asparagine 152, and asparagine 182. Residues 259–264 (VPEKKT) form an interaction with CD163 region.

It belongs to the peptidase S1 family. Tetramer of two alpha and two beta chains; disulfide-linked. The hemoglobin/haptoglobin complex is composed of a haptoglobin dimer bound to two hemoglobin alpha-beta dimers. Interacts with CD163. Interacts with ERGIC3.

It localises to the secreted. In terms of biological role, as a result of hemolysis, hemoglobin is found to accumulate in the kidney and is secreted in the urine. Haptoglobin captures, and combines with free plasma hemoglobin to allow hepatic recycling of heme iron and to prevent kidney damage. Haptoglobin also acts as an antioxidant, has antibacterial activity and plays a role in modulating many aspects of the acute phase response. Hemoglobin/haptoglobin complexes are rapidly cleared by the macrophage CD163 scavenger receptor expressed on the surface of liver Kupfer cells through an endocytic lysosomal degradation pathway. The protein is Haptoglobin (HP) of Pongo abelii (Sumatran orangutan).